The sequence spans 358 residues: G-protein coupled receptor 87 (358 aa).

Topologically, residues 1 to 47 (MGLNLTLTKLPGNELYSQASHTANSTSEGHGKNSTLHNKFDTIILPV) are extracellular. N-linked (GlcNAc...) asparagine glycans are attached at residues asparagine 4, asparagine 24, and asparagine 33. A helical transmembrane segment spans residues 48–68 (LYLVIFVASILLNGLAVWIFF). Residues 69 to 75 (HIRNKTS) lie on the Cytoplasmic side of the membrane. Residues 76–96 (FIFYLKNIVVADLIMTLTFPF) form a helical membrane-spanning segment. Over 97–116 (RIVRDAGFGPWYFEFILCRY) the chain is Extracellular. Cysteine 114 and cysteine 192 are joined by a disulfide. A helical membrane pass occupies residues 117-137 (TSVLFYANMYTSIVFLGLISV). The Cytoplasmic portion of the chain corresponds to 138–159 (DRYLKVVKPFGDSRMYSITFTK). A helical transmembrane segment spans residues 160–180 (VLSVCVWVIMAILSLPNIILT). Residues 181–208 (NGQPTKENIHDCMKLKSPLGAKWHMAVT) are Extracellular-facing. The chain crosses the membrane as a helical span at residues 209–229 (YVDSCLFVAVLVILIGCYIAI). Residues 230 to 256 (SRYIHKSSRQFISQSSRKRKHNQSIRV) lie on the Cytoplasmic side of the membrane. A helical transmembrane segment spans residues 257–277 (VVAVFFTCFLPYHLCRIPFTF). Over 278–297 (SNLDRLLDESAHKILYYCKE) the chain is Extracellular. The helical transmembrane segment at 298–318 (MTLFLSACNVCLDPIIYFFMC) threads the bilayer. Over 319 to 358 (KSFSRRLFKKSNIRTRSESIRSLQSVRRSEVRIYYDYTDV) the chain is Cytoplasmic.

Belongs to the G-protein coupled receptor 1 family. Expressed at high levels in testis and brain and to a lesser extent placenta, ovary, prostate, and skeletal muscle but not in heart, lung, kidney, liver or intestine.

The protein localises to the cell membrane. In terms of biological role, receptor for lysophosphatidic acid (LPA). Necessary for p53/TP53-dependent survival in response to DNA damage. Promotes the Hippo-YAP signaling pathway and thereby modulates glycolysis and oxidative stress production by the regulation of hexokinase-2/HK2. The chain is G-protein coupled receptor 87 (Gpr87) from Mus musculus (Mouse).